Reading from the N-terminus, the 595-residue chain is Aspartate--tRNA ligase (595 aa).

An L-aspartate-binding site is contributed by Glu176. The interval 200–203 (QIFK) is aspartate. An L-aspartate-binding site is contributed by Arg222. ATP-binding positions include 222-224 (RDE) and Gln231. His450 lines the L-aspartate pocket. Position 484 (Glu484) interacts with ATP. Residue Arg491 coordinates L-aspartate. 536–539 (GLDR) is a binding site for ATP.

It belongs to the class-II aminoacyl-tRNA synthetase family. Type 1 subfamily. Homodimer.

The protein localises to the cytoplasm. The catalysed reaction is tRNA(Asp) + L-aspartate + ATP = L-aspartyl-tRNA(Asp) + AMP + diphosphate. Catalyzes the attachment of L-aspartate to tRNA(Asp) in a two-step reaction: L-aspartate is first activated by ATP to form Asp-AMP and then transferred to the acceptor end of tRNA(Asp). The protein is Aspartate--tRNA ligase of Halalkalibacterium halodurans (strain ATCC BAA-125 / DSM 18197 / FERM 7344 / JCM 9153 / C-125) (Bacillus halodurans).